We begin with the raw amino-acid sequence, 1400 residues long: DNA-directed RNA polymerase subunit beta' (1400 aa).

4 residues coordinate Zn(2+): Cys71, Cys73, Cys86, and Cys89. Mg(2+)-binding residues include Asp462, Asp464, and Asp466. Zn(2+) contacts are provided by Cys820, Cys893, Cys900, and Cys903.

Belongs to the RNA polymerase beta' chain family. In terms of assembly, the RNAP catalytic core consists of 2 alpha, 1 beta, 1 beta' and 1 omega subunit. When a sigma factor is associated with the core the holoenzyme is formed, which can initiate transcription. Requires Mg(2+) as cofactor. It depends on Zn(2+) as a cofactor.

The catalysed reaction is RNA(n) + a ribonucleoside 5'-triphosphate = RNA(n+1) + diphosphate. DNA-dependent RNA polymerase catalyzes the transcription of DNA into RNA using the four ribonucleoside triphosphates as substrates. The protein is DNA-directed RNA polymerase subunit beta' of Methylobacterium sp. (strain 4-46).